A 424-amino-acid polypeptide reads, in one-letter code: Glutamyl-tRNA reductase (424 aa).

Substrate-binding positions include 51–54 (TCNR), Ser-99, 104–106 (EDQ), and Gln-110. Cys-52 serves as the catalytic Nucleophile. 179-184 (GTGEMG) contributes to the NADP(+) binding site.

It belongs to the glutamyl-tRNA reductase family. Homodimer.

The enzyme catalyses (S)-4-amino-5-oxopentanoate + tRNA(Glu) + NADP(+) = L-glutamyl-tRNA(Glu) + NADPH + H(+). It functions in the pathway porphyrin-containing compound metabolism; protoporphyrin-IX biosynthesis; 5-aminolevulinate from L-glutamyl-tRNA(Glu): step 1/2. Catalyzes the NADPH-dependent reduction of glutamyl-tRNA(Glu) to glutamate 1-semialdehyde (GSA). This Methanospirillum hungatei JF-1 (strain ATCC 27890 / DSM 864 / NBRC 100397 / JF-1) protein is Glutamyl-tRNA reductase.